The following is a 692-amino-acid chain: Elongation factor G (692 aa).

Positions 8–282 (ENTRNIGIMA…AVIDYLPSPL (275 aa)) constitute a tr-type G domain. GTP contacts are provided by residues 17-24 (AHIDAGKT), 81-85 (DTPGH), and 135-138 (NKMD).

Belongs to the TRAFAC class translation factor GTPase superfamily. Classic translation factor GTPase family. EF-G/EF-2 subfamily.

The protein localises to the cytoplasm. Catalyzes the GTP-dependent ribosomal translocation step during translation elongation. During this step, the ribosome changes from the pre-translocational (PRE) to the post-translocational (POST) state as the newly formed A-site-bound peptidyl-tRNA and P-site-bound deacylated tRNA move to the P and E sites, respectively. Catalyzes the coordinated movement of the two tRNA molecules, the mRNA and conformational changes in the ribosome. In Bacillus anthracis (strain CDC 684 / NRRL 3495), this protein is Elongation factor G.